The following is an 80-amino-acid chain: Mitotic-spindle organizing protein 1 (80 aa).

This sequence belongs to the MOZART1 family. Part of the gamma-tubulin complex.

It localises to the cytoplasm. It is found in the cytoskeleton. Its subcellular location is the microtubule organizing center. The protein localises to the spindle pole body. In terms of biological role, required for gamma-tubulin complex recruitment to the microtubule organizing center (MTOC). The chain is Mitotic-spindle organizing protein 1 from Pyricularia oryzae (strain 70-15 / ATCC MYA-4617 / FGSC 8958) (Rice blast fungus).